The primary structure comprises 430 residues: Alpha-1,6-mannosyl-glycoprotein 2-beta-N-acetylglucosaminyltransferase (430 aa).

Residues 1–12 are Cytoplasmic-facing; it reads MANLWKKQRLRD. The helical; Signal-anchor for type II membrane protein transmembrane segment at 13 to 35 threads the bilayer; it reads TGLCRLGILFAVTLSIVLMLVSV. Topologically, residues 36-430 are lumenal; sequence PRTALNGSSI…YRYSSSSASP (395 aa). Asparagine 41 and asparagine 61 each carry an N-linked (GlcNAc...) asparagine glycan. Substrate is bound by residues 104 to 108 and aspartate 135; that span reads YVHNR. Cysteine 177 and cysteine 188 are disulfide-bonded. 205–209 serves as a coordination point for substrate; sequence SLKHH. Mn(2+) is bound at residue aspartate 237. The cysteines at positions 259 and 262 are disulfide-linked. An N-linked (GlcNAc...) asparagine glycan is attached at asparagine 295. Cysteines 310 and 414 form a disulfide. Histidine 345 contributes to the Mn(2+) binding site.

It belongs to the glycosyltransferase 16 (GT16) protein family. The cofactor is Mn(2+).

Its subcellular location is the golgi apparatus membrane. The enzyme catalyses an N(4)-{beta-D-GlcNAc-(1-&gt;2)-alpha-D-Man-(1-&gt;3)-[alpha-D-Man-(1-&gt;6)]-beta-D-Man-(1-&gt;4)-beta-D-GlcNAc-(1-&gt;4)-beta-D-GlcNAc}-L-asparaginyl-[protein] + UDP-N-acetyl-alpha-D-glucosamine = N(4)-{beta-D-GlcNAc-(1-&gt;2)-alpha-D-Man-(1-&gt;3)-[beta-D-GlcNAc-(1-&gt;2)-alpha-D-Man-(1-&gt;6)]-beta-D-Man-(1-&gt;4)-beta-D-GlcNAc-(1-&gt;4)-beta-D-GlcNAc}-L-asparaginyl-[protein] + UDP + H(+). It participates in protein modification; protein glycosylation. Functionally, catalyzes an essential step in the conversion of oligo-mannose and hybrid to complex N-glycans. The sequence is that of Alpha-1,6-mannosyl-glycoprotein 2-beta-N-acetylglucosaminyltransferase from Arabidopsis thaliana (Mouse-ear cress).